The sequence spans 120 residues: Glycine cleavage system H protein (120 aa).

A Lipoyl-binding domain is found at Val-17–Lys-99. An N6-lipoyllysine modification is found at Lys-58.

It belongs to the GcvH family. In terms of assembly, the glycine cleavage system is composed of four proteins: P, T, L and H. (R)-lipoate serves as cofactor.

Its function is as follows. The glycine cleavage system catalyzes the degradation of glycine. The H protein shuttles the methylamine group of glycine from the P protein to the T protein. The sequence is that of Glycine cleavage system H protein from Sinorhizobium fredii (strain NBRC 101917 / NGR234).